A 358-amino-acid polypeptide reads, in one-letter code: Protein-glutamate methylesterase/protein-glutamine glutaminase 1 (358 aa).

One can recognise a Response regulatory domain in the interval 7–124; that stretch reads SVLLVDDSAV…KNFLIDSAAE (118 aa). The residue at position 58 (Asp-58) is a 4-aspartylphosphate. One can recognise a CheB-type methylesterase domain in the interval 170–358; that stretch reads AQTTERIVAI…QEIHQAILHR (189 aa). Catalysis depends on residues Ser-182, His-208, and Asp-304.

This sequence belongs to the CheB family. In terms of processing, phosphorylated by CheA. Phosphorylation of the N-terminal regulatory domain activates the methylesterase activity.

The protein resides in the cytoplasm. It catalyses the reaction [protein]-L-glutamate 5-O-methyl ester + H2O = L-glutamyl-[protein] + methanol + H(+). It carries out the reaction L-glutaminyl-[protein] + H2O = L-glutamyl-[protein] + NH4(+). Functionally, involved in chemotaxis. Part of a chemotaxis signal transduction system that modulates chemotaxis in response to various stimuli. Catalyzes the demethylation of specific methylglutamate residues introduced into the chemoreceptors (methyl-accepting chemotaxis proteins or MCP) by CheR. Also mediates the irreversible deamidation of specific glutamine residues to glutamic acid. The sequence is that of Protein-glutamate methylesterase/protein-glutamine glutaminase 1 from Pseudomonas savastanoi pv. phaseolicola (strain 1448A / Race 6) (Pseudomonas syringae pv. phaseolicola (strain 1448A / Race 6)).